A 99-amino-acid polypeptide reads, in one-letter code: DNA-directed RNA polymerase subunit omega (99 aa).

Belongs to the RNA polymerase subunit omega family. As to quaternary structure, the RNAP catalytic core consists of 2 alpha, 1 beta, 1 beta' and 1 omega subunit. When a sigma factor is associated with the core the holoenzyme is formed, which can initiate transcription.

It carries out the reaction RNA(n) + a ribonucleoside 5'-triphosphate = RNA(n+1) + diphosphate. In terms of biological role, promotes RNA polymerase assembly. Latches the N- and C-terminal regions of the beta' subunit thereby facilitating its interaction with the beta and alpha subunits. The sequence is that of DNA-directed RNA polymerase subunit omega from Xanthomonas axonopodis pv. citri (strain 306).